Consider the following 466-residue polypeptide: 55 kDa erythrocyte membrane protein (466 aa).

At Thr2 the chain carries N-acetylthreonine. At Ser19 the chain carries Phosphoserine. Residue Thr49 is modified to Phosphothreonine. Ser57 and Ser110 each carry phosphoserine. Residues 71-152 (LIQFEKVTEE…MISLKVIPNQ (82 aa)) enclose the PDZ domain. The 71-residue stretch at 158-228 (ALQMFMRAQF…PSPELQEWRV (71 aa)) folds into the SH3 domain. Ser243 carries the phosphoserine modification. The segment at 268–466 (VVSYEEVVRL…PQWVPVSWVY (199 aa)) is interaction with PALS1. Residues 282-451 (RKTLVLIGAS…TLKTLQETFD (170 aa)) form the Guanylate kinase-like domain.

It belongs to the MAGUK family. In terms of assembly, heterodimer with PALS1. Interacts with DLG5 and NF2. Interacts (via guanylate kinase-like domain) with WHRN (via third PDZ domain). Interacts with PALS1. Post-translationally, palmitoylated.

It is found in the cell membrane. Its subcellular location is the cell projection. The protein localises to the stereocilium. In terms of biological role, essential regulator of neutrophil polarity. Regulates neutrophil polarization by regulating AKT1 phosphorylation through a mechanism that is independent of PIK3CG activity. This is 55 kDa erythrocyte membrane protein (MPP1) from Bos taurus (Bovine).